Here is a 314-residue protein sequence, read N- to C-terminus: Zinc transporter ZIP3 (314 aa).

Residues M1 to L3 lie on the Extracellular side of the membrane. A helical transmembrane segment spans residues I4–I24. At P25–K41 the chain is on the cytoplasmic side. A helical membrane pass occupies residues I42–L62. Residues L63–P84 lie on the Extracellular side of the membrane. Residues L85–M105 traverse the membrane as a helical segment. At T106 to R169 the chain is on the cytoplasmic side. The chain crosses the membrane as a helical span at residues L170–L190. Residues Q191–K196 are Extracellular-facing. A helical transmembrane segment spans residues L197–V217. At S218–A229 the chain is on the cytoplasmic side. The helical transmembrane segment at I230–I250 threads the bilayer. Topologically, residues Q251–S262 are extracellular. The chain crosses the membrane as a helical span at residues A263–V283. The Cytoplasmic segment spans residues K284–R292. A helical transmembrane segment spans residues L293–K313. W314 is a topological domain (extracellular).

The protein belongs to the ZIP transporter (TC 2.A.5) family.

It is found in the cell membrane. Its subcellular location is the apical cell membrane. The enzyme catalyses Zn(2+)(in) = Zn(2+)(out). In terms of biological role, transporter for the divalent cation Zn(2+). Mediates the influx of Zn(2+) into cells from extracellular space. The sequence is that of Zinc transporter ZIP3 (slc39a3) from Xenopus tropicalis (Western clawed frog).